Consider the following 334-residue polypeptide: ADP-L-glycero-D-manno-heptose-6-epimerase (334 aa).

NADP(+)-binding positions include Phe11–Ile12, Asp32–Asn33, Lys39, Lys54, Gln77–Ser81, and Asn94. The active-site Proton acceptor is the Tyr141. Position 145 (Lys145) interacts with NADP(+). Asn171 provides a ligand contact to substrate. 2 residues coordinate NADP(+): Val172 and Lys180. Lys180 serves as the catalytic Proton acceptor. Substrate is bound by residues Arg182, His189, Phe203 to Asn206, Arg216, and Tyr295.

It belongs to the NAD(P)-dependent epimerase/dehydratase family. HldD subfamily. Homopentamer. NADP(+) serves as cofactor.

The catalysed reaction is ADP-D-glycero-beta-D-manno-heptose = ADP-L-glycero-beta-D-manno-heptose. The protein operates within nucleotide-sugar biosynthesis; ADP-L-glycero-beta-D-manno-heptose biosynthesis; ADP-L-glycero-beta-D-manno-heptose from D-glycero-beta-D-manno-heptose 7-phosphate: step 4/4. It functions in the pathway bacterial outer membrane biogenesis; LOS core biosynthesis. In terms of biological role, catalyzes the interconversion between ADP-D-glycero-beta-D-manno-heptose and ADP-L-glycero-beta-D-manno-heptose via an epimerization at carbon 6 of the heptose. This is ADP-L-glycero-D-manno-heptose-6-epimerase from Neisseria gonorrhoeae.